Here is a 118-residue protein sequence, read N- to C-terminus: Large ribosomal subunit protein bL20c (118 aa).

It belongs to the bacterial ribosomal protein bL20 family.

It localises to the plastid. Its function is as follows. Binds directly to 23S ribosomal RNA and is necessary for the in vitro assembly process of the 50S ribosomal subunit. It is not involved in the protein synthesizing functions of that subunit. This chain is Large ribosomal subunit protein bL20c (rpl20), found in Cuscuta reflexa (Southern Asian dodder).